Here is a 312-residue protein sequence, read N- to C-terminus: MSRLSEPSPYVEFDRRQWRALRMSTPLALTEEELVGLRGLGEQIDLLEVEEVYLPLARLIHLQVAARQRLFAATAEFLGEPQQNPDRPVPFIIGVAGSVAVGKSTTARVLQALLARWDHHPRVDLVTTDGFLYPNAELQRRNLMHRKGFPESYNRRALMRFVTSVKSGSDYACAPVYSHLHYDIIPGAEQVVRHPDILILEGLNVLQTGPTLMVSDLFDFSLYVDARIEDIEQWYVSRFLAMRTTAFADPESHFHHYAAFSDSQAVVAAREIWRTINRPNLVENILPTRPRATLVLRKDADHSINRLRLRKL.

Residue 97–104 (GSVAVGKS) coordinates ATP.

It belongs to the prokaryotic pantothenate kinase family.

It is found in the cytoplasm. The enzyme catalyses (R)-pantothenate + ATP = (R)-4'-phosphopantothenate + ADP + H(+). It functions in the pathway cofactor biosynthesis; coenzyme A biosynthesis; CoA from (R)-pantothenate: step 1/5. This chain is Pantothenate kinase, found in Mycobacterium bovis (strain BCG / Pasteur 1173P2).